We begin with the raw amino-acid sequence, 185 residues long: Elongation factor P (185 aa).

The protein belongs to the elongation factor P family.

Its subcellular location is the cytoplasm. The protein operates within protein biosynthesis; polypeptide chain elongation. Involved in peptide bond synthesis. Stimulates efficient translation and peptide-bond synthesis on native or reconstituted 70S ribosomes in vitro. Probably functions indirectly by altering the affinity of the ribosome for aminoacyl-tRNA, thus increasing their reactivity as acceptors for peptidyl transferase. The polypeptide is Elongation factor P (Deinococcus radiodurans (strain ATCC 13939 / DSM 20539 / JCM 16871 / CCUG 27074 / LMG 4051 / NBRC 15346 / NCIMB 9279 / VKM B-1422 / R1)).